A 143-amino-acid polypeptide reads, in one-letter code: MRVLVQRVSSAAVTVEGAVVGALRPDSQGLLALVGVTHSDDRDKARRLAEKLWKLRILADERSASDVGAPILVVSQFTLYADTAKGRRPSWNAAAPAAIAEPLVTEFAAALQGLGADVQTGVFGANMQVELVNDGPVTVLLEL.

A Gly-cisPro motif, important for rejection of L-amino acids motif is present at residues 135–136 (GP).

Belongs to the DTD family. In terms of assembly, homodimer.

The protein localises to the cytoplasm. It catalyses the reaction glycyl-tRNA(Ala) + H2O = tRNA(Ala) + glycine + H(+). The enzyme catalyses a D-aminoacyl-tRNA + H2O = a tRNA + a D-alpha-amino acid + H(+). Functionally, an aminoacyl-tRNA editing enzyme that deacylates mischarged D-aminoacyl-tRNAs. Also deacylates mischarged glycyl-tRNA(Ala), protecting cells against glycine mischarging by AlaRS. Acts via tRNA-based rather than protein-based catalysis; rejects L-amino acids rather than detecting D-amino acids in the active site. By recycling D-aminoacyl-tRNA to D-amino acids and free tRNA molecules, this enzyme counteracts the toxicity associated with the formation of D-aminoacyl-tRNA entities in vivo and helps enforce protein L-homochirality. The chain is D-aminoacyl-tRNA deacylase from Mycolicibacterium paratuberculosis (strain ATCC BAA-968 / K-10) (Mycobacterium paratuberculosis).